A 483-amino-acid chain; its full sequence is Triplex capsid protein 1 (483 aa).

The RIP homotypic interaction motif (RHIM) motif lies at 24 to 40 (LLGNNRFIQIGNGLHMT).

This sequence belongs to the herpesviridae TRX1 protein family. Interacts with TRX2, MCP and capsid vertex component 2/CVC2. Self-assembles into homo-oligomeric amyloid fibrils. Interacts with host ZBP1; this interaction prevents host necroptosis and extrinsic apoptosis. Interacts with host RIPK3.

The protein localises to the virion. It localises to the host nucleus. In terms of biological role, structural component of the T=16 icosahedral capsid. The capsid is composed of pentamers and hexamers of major capsid protein/MCP, which are linked together by heterotrimers called triplexes. These triplexes are formed by a single molecule of triplex protein 1/TRX1 and two copies of triplex protein 2/TRX2. Additionally, TRX1 is required for efficient transport of TRX2 to the nucleus, which is the site of capsid assembly. Also prevents necroptosis and extrinsic apoptosis by sequestering host ZBP1 into large, insoluble supercomplexes and impairing its ability to interact with RIPK3. In Varicella-zoster virus (strain Dumas) (HHV-3), this protein is Triplex capsid protein 1.